A 436-amino-acid chain; its full sequence is Origin recognition complex subunit 4 (436 aa).

K7 carries the post-translational modification N6-methyllysine. Residue G67 to T74 participates in ATP binding.

It belongs to the ORC4 family. Component of ORC, a complex composed of at least 6 subunits: ORC1, ORC2, ORC3, ORC4, ORC5 and ORC6. ORC is regulated in a cell-cycle dependent manner. It is sequentially assembled at the exit from anaphase of mitosis and disassembled as cells enter S phase. Interacts with DBF4. Interacts with POLQ.

Its subcellular location is the nucleus. In terms of biological role, component of the origin recognition complex (ORC) that binds origins of replication. DNA-binding is ATP-dependent. The specific DNA sequences that define origins of replication have not been identified yet. ORC is required to assemble the pre-replication complex necessary to initiate DNA replication. Binds histone H3 and H4 trimethylation marks H3K9me3, H3K27me3 and H4K20me3. The protein is Origin recognition complex subunit 4 (ORC4) of Pongo abelii (Sumatran orangutan).